We begin with the raw amino-acid sequence, 768 residues long: MRLWNRFSRLGNLLCACAACGCSFTPWRCSSSPLLSSFSAYNMSSGNRVTSSVGGSSGATEVCPSHTPLSSSTLLRYTIAPSEPTMGSPWQTSEESASRRLAALTSYPPSNIRNVAVVAHVDHGKTTLSDVLLRRTGVLKGSVNAGAYTDRLLVERERGITVKSQTCSMFLKYGGSEFLLNLIDTPGHVDFQYEVSRSVRAAQAVLLLVDVAQGIEAQTMSHFHMALDQGLAIIPVFTKMDCVLNDTTVDAALQQLEDSTGLLRSEVVFTSAKEQLGVEALLQAIIERVPSPSGAIGLSDVCQLPPLLPGSTARVAMEAEMVPLRAILLDSWTRECGGGLYRPPSKTSSALSGNVKIDEDKDTVTCLVSVIDGTLTARTNILLYHSQKRYEAREVGVIHPELRPTGALTVGMVGYVVFTRVQREDFSVGETLYTLPTRKFTRGGIAPVPGFRRVHPVVFAGFYPDEGEYVTQLREAVEKLRMNDPAVTVEPLECQALGSGLQLGFLGVLHMQIFQERLLSEFGQRVLVTPPVVQYKYREAAGGDDQPPKPLSVHTWRWLHEGVSCYMEPHVTATVVTPSEYAQIIDGEAQRHYRGKQLDMRVMDDARVLLRYKMPLADMVRGFFTFVKSQSHGYASLEYDELVYEEADLVRVDIVVQKARISALAVICPRHEAPSVGKRIVASLKSNLTRTAVDIPLQALVGSKVVARETVRAYRKDVTAKIHAGDISRKQKKWNDQKKGKERMARRTVGGVTLDQSVLAAAMGATAL.

Residues 1–29 (MRLWNRFSRLGNLLCACAACGCSFTPWRC) constitute a mitochondrion transit peptide. A tr-type G domain is found at 110–293 (SNIRNVAVVA…AIIERVPSPS (184 aa)). GTP-binding positions include 119 to 126 (AHVDHGKT), 184 to 188 (DTPGH), and 238 to 241 (TKMD).

It belongs to the TRAFAC class translation factor GTPase superfamily. Classic translation factor GTPase family. LepA subfamily.

The protein resides in the mitochondrion inner membrane. It catalyses the reaction GTP + H2O = GDP + phosphate + H(+). In terms of biological role, promotes mitochondrial protein synthesis. May act as a fidelity factor of the translation reaction, by catalyzing a one-codon backward translocation of tRNAs on improperly translocated ribosomes. Binds to mitochondrial ribosomes in a GTP-dependent manner. The sequence is that of Translation factor GUF1 homolog, mitochondrial from Trypanosoma brucei brucei (strain 927/4 GUTat10.1).